We begin with the raw amino-acid sequence, 248 residues long: UPF0736 protein BCAH187_A1335 (248 aa).

This sequence belongs to the UPF0736 family.

This is UPF0736 protein BCAH187_A1335 from Bacillus cereus (strain AH187).